The primary structure comprises 292 residues: Ribosomal protein L11 methyltransferase (292 aa).

The S-adenosyl-L-methionine site is built by Thr-136, Gly-159, Asp-181, and Asn-228.

Belongs to the methyltransferase superfamily. PrmA family.

Its subcellular location is the cytoplasm. The catalysed reaction is L-lysyl-[protein] + 3 S-adenosyl-L-methionine = N(6),N(6),N(6)-trimethyl-L-lysyl-[protein] + 3 S-adenosyl-L-homocysteine + 3 H(+). Its function is as follows. Methylates ribosomal protein L11. The protein is Ribosomal protein L11 methyltransferase of Rhizobium etli (strain ATCC 51251 / DSM 11541 / JCM 21823 / NBRC 15573 / CFN 42).